A 611-amino-acid polypeptide reads, in one-letter code: MSKIIGIDLGTTNSCVAVMEGGEATVIPNPEGNRTTPSVVAFKDGERLVGEVAKRQAITNPNTVISIKRHMGTDYKVDIEGKSYSPQEISAIILQKLKADAEAYLGEKVTKAVITVPAYFNDSQRQATKDAGKIAGLEVDRIVNEPTAAALAYGLEKEDDQTILVYDLGGGTFDVSILELGDGFFEVKATSGDNKLGGDDFDEVIMDHLVAEFKKENGIDLSQDKMAMQRLKDAAEKAKKDLSGVTQTQISLPFITADATGPKHLELTLTRAKFDELSADLVERTLGPTRRALSDAGLSASDIDKVVLVGGSTRIPAVQEAIKKLTGKDPHKGVNPDEVVALGAAVQAGVLTGDVKDVVLLDVTPLSLGIETMGGVFTKLIERNTTIPTSKSQVFSTAADNQPSVDIHVLQGEREMAADNKTLGRFQLTDIPPAPRGVPQIEVTFDIDANGIVNVKAKDLGTNKEQSITITSSSGLSEEEIDKMVQEAEANAEADKKRREQVELRNEADQLVFSTEKTLKDLGDNVDQAEKDKAEAAKDKLKKALEADNTDDIKAAKDELQEIVTALTTKLYEQAAQAAQAQQDGGNESADKQDDNVVDADYEEVNDDDKK.

Thr172 bears the Phosphothreonine; by autocatalysis mark. Residues 575-611 are disordered; sequence AAQAAQAQQDGGNESADKQDDNVVDADYEEVNDDDKK. The span at 596–611 shows a compositional bias: acidic residues; that stretch reads NVVDADYEEVNDDDKK.

It belongs to the heat shock protein 70 family.

Acts as a chaperone. The protein is Chaperone protein DnaK of Shouchella clausii (strain KSM-K16) (Alkalihalobacillus clausii).